We begin with the raw amino-acid sequence, 287 residues long: Bifunctional protein FolD (287 aa).

Residues 166–168 and Ile-232 contribute to the NADP(+) site; that span reads GAS.

It belongs to the tetrahydrofolate dehydrogenase/cyclohydrolase family. Homodimer.

It catalyses the reaction (6R)-5,10-methylene-5,6,7,8-tetrahydrofolate + NADP(+) = (6R)-5,10-methenyltetrahydrofolate + NADPH. The enzyme catalyses (6R)-5,10-methenyltetrahydrofolate + H2O = (6R)-10-formyltetrahydrofolate + H(+). Its pathway is one-carbon metabolism; tetrahydrofolate interconversion. Its function is as follows. Catalyzes the oxidation of 5,10-methylenetetrahydrofolate to 5,10-methenyltetrahydrofolate and then the hydrolysis of 5,10-methenyltetrahydrofolate to 10-formyltetrahydrofolate. The protein is Bifunctional protein FolD of Pectobacterium carotovorum subsp. carotovorum (strain PC1).